Reading from the N-terminus, the 176-residue chain is Ribosome maturation factor RimM (176 aa).

The region spanning 99-173 is the PRC barrel domain; that stretch reads ADEYYWHDLL…TMTITPLEGL (75 aa).

Belongs to the RimM family. As to quaternary structure, binds ribosomal protein uS19.

The protein localises to the cytoplasm. In terms of biological role, an accessory protein needed during the final step in the assembly of 30S ribosomal subunit, possibly for assembly of the head region. Essential for efficient processing of 16S rRNA. May be needed both before and after RbfA during the maturation of 16S rRNA. It has affinity for free ribosomal 30S subunits but not for 70S ribosomes. This is Ribosome maturation factor RimM from Trichlorobacter lovleyi (strain ATCC BAA-1151 / DSM 17278 / SZ) (Geobacter lovleyi).